Here is a 278-residue protein sequence, read N- to C-terminus: Neuronal membrane glycoprotein M6-a (278 aa).

An N-acetylmethionine modification is found at M1. At 1 to 22 the chain is on the cytoplasmic side; that stretch reads MEENMEEGQTQKGCFECCIKCL. Residues 23–43 traverse the membrane as a helical segment; that stretch reads GGIPYASLIATILLYAGVALF. The Extracellular segment spans residues 44–84; sequence CGCGHEALSGTVNILQTYFEMARTAGDTLDVFTMIDIFKYV. The helical transmembrane segment at 85 to 105 threads the bilayer; the sequence is IYGIAAAFFVYGILLMVEGFF. Over 106-127 the chain is Cytoplasmic; it reads TTGAIKDLYGDFKITTCGRCVS. A helical transmembrane segment spans residues 128-148; it reads AWFIMLTYLFMLAWLGVTAFT. Topologically, residues 149 to 213 are extracellular; that stretch reads SLPVYMYFNL…STELNMTFHL (65 aa). N164 is a glycosylation site (N-linked (GlcNAc...) asparagine). C174 and C192 form a disulfide bridge. N-linked (GlcNAc...) asparagine glycosylation is present at N208. The helical transmembrane segment at 214–234 threads the bilayer; that stretch reads FIVALAGAGAAVIAMVHYLMV. Residues 235–278 lie on the Cytoplasmic side of the membrane; the sequence is LSANWAYVKDACRMQKYEDIKSKEEQELHDIHSTRSKERLNAYT. A Phosphoserine modification is found at S256. A Phosphothreonine modification is found at T278.

Belongs to the myelin proteolipid protein family. In terms of assembly, interacts with OPRM1. Interacts with palmitoyltransferase ZDHHC17/HIP14; the interaction leads to palmitoylation of GPM6A. N-glycosylated. In terms of processing, palmitoylated by ZDHHC17/HIP14.

The protein resides in the cell membrane. It localises to the cell projection. It is found in the axon. The protein localises to the growth cone. Its subcellular location is the dendritic spine. The protein resides in the filopodium. It localises to the neuron projection. In terms of biological role, involved in neuronal differentiation, including differentiation and migration of neuronal stem cells. Plays a role in neuronal plasticity and is involved in neurite and filopodia outgrowth, filopodia motility and probably synapse formation. GPM6A-induced filopodia formation involves mitogen-activated protein kinase (MAPK) and Src signaling pathways. May be involved in neuronal NGF-dependent Ca(2+) influx. May be involved in regulation of endocytosis and intracellular trafficking of G-protein-coupled receptors (GPCRs); may enhance internalization and recycling of mu-type opioid receptor. The chain is Neuronal membrane glycoprotein M6-a (GPM6A) from Bos taurus (Bovine).